The primary structure comprises 278 residues: Bicarbonate transport system permease protein CmpB (278 aa).

7 helical membrane passes run 24–44, 93–113, 124–144, 151–171, 196–216, 217–237, and 249–269; these read LDGI…WQIF, VAQG…LVGL, LFQF…LVAF, AIFV…AEGV, VVLP…IGLS, WLAI…GFFI, and IILA…FVAW. The 182-residue stretch at 86–267 folds into the ABC transmembrane type-1 domain; sequence TIASLTRVAQ…AVGLLLDRFV (182 aa).

This sequence belongs to the binding-protein-dependent transport system permease family. As to quaternary structure, the complex is composed of two ATP-binding proteins (CmpC and CmpD), a transmembrane protein (CmpB) and a solute-binding protein (CmpA).

Its subcellular location is the cell inner membrane. In terms of biological role, part of the ABC transporter complex CmpABCD involved in bicarbonate transport. Probably responsible for the translocation of the substrate across the membrane. In Synechococcus sp. (strain ATCC 27144 / PCC 6301 / SAUG 1402/1) (Anacystis nidulans), this protein is Bicarbonate transport system permease protein CmpB (cmpB).